Reading from the N-terminus, the 408-residue chain is Tyrosine--tRNA ligase (408 aa).

Tyrosine 35 contributes to the L-tyrosine binding site. The 'HIGH' region signature appears at proline 40–histidine 49. Residues tyrosine 168 and glutamine 172 each contribute to the L-tyrosine site. The short motif at lysine 228–threonine 232 is the 'KMSKS' region element. Lysine 231 contacts ATP. The S4 RNA-binding domain maps to isoleucine 342–leucine 407.

Belongs to the class-I aminoacyl-tRNA synthetase family. TyrS type 1 subfamily. As to quaternary structure, homodimer.

Its subcellular location is the cytoplasm. The enzyme catalyses tRNA(Tyr) + L-tyrosine + ATP = L-tyrosyl-tRNA(Tyr) + AMP + diphosphate + H(+). Functionally, catalyzes the attachment of tyrosine to tRNA(Tyr) in a two-step reaction: tyrosine is first activated by ATP to form Tyr-AMP and then transferred to the acceptor end of tRNA(Tyr). This is Tyrosine--tRNA ligase from Acetivibrio thermocellus (strain ATCC 27405 / DSM 1237 / JCM 9322 / NBRC 103400 / NCIMB 10682 / NRRL B-4536 / VPI 7372) (Clostridium thermocellum).